The sequence spans 643 residues: E3 ubiquitin-protein ligase AMFR (643 aa).

The tract at residues 39 to 67 (PEAGPGEPDQLTASLQPEPPAPARPSAGG) is disordered. The next 6 membrane-spanning stretches (helical) occupy residues 82–102 (LFVWVLVNTACCVLMLVAKLI), 122–142 (FWNFIFYKFIFIFGVLNVQTV), 145–165 (VVMWCLWFAGLVFLHLMVQLC), 186–206 (VLSLLVAMLLSCCGLAAVCSI), 215–235 (TLAFMAAESLLVTVRTAHVIL), and 276–296 (HIHMLLFGNIWLSMASLVIFM). An RING-type zinc finger spans residues 341 to 379 (CAICWDSMQAARKLPCGHLFHNSCLRSWLEQDTSCPTCR). The helical transmembrane segment at 429–449 (IASWLPSFSVEVMHTTNILGI) threads the bilayer. One can recognise a CUE domain in the interval 456 to 498 (QLNAMAHQIQEMFPQVPYHLVLQDLQLTRSVEITTDNILEGRI). 2 disordered regions span residues 504-579 (TQRS…DERQ) and 596-624 (RFLNKSSEDDAASESFLPSEGASSDPVTL). Phosphoserine is present on residues serine 516, serine 523, and serine 542. Acidic residues predominate over residues 548–563 (TLDFGEVEVEPSEVED). Positions 564–579 (FEARGSRFSKSADERQ) are enriched in basic and acidic residues. The VCP/p97-interacting motif (VIM) stretch occupies residues 622 to 640 (VTLRRRMLAAAAERRLQKQ).

Interacts with RNF5. Also forms an ERAD complex containing VCP/p97, NGLY1; PSMC1; SAKS1 and RAD23B required for coupling retrotranslocation, ubiquitination and deglycosylation. Interacts with DERL1. Interacts (through a region distinct from the RING finger) with UBE2G2/UBC7. Component of the VCP/p97-AMFR/gp78 complex that enhances VCP/p97 binding to polyubiquitinated proteins for their degradation by the endoplasmic reticulum-associated degradation (ERAD) pathway. Interacts (via the VIM) with VCP/p97. Interacts (via its membrane domain) with INSIG1; the interaction initiates the sterol-mediated ubiquitination and degradation of HMGCR by the ERAD pathway. Interacts with AUP1, UBE2G2 and RNF139/TRC8; interaction with AUP1 facilitates interaction of AMFR with ubiquitin-conjugating enzyme UBE2G2 and ubiquitin ligase RNF139, leading to sterol-induced ubiquitination of HMGCR and its subsequent proteasomal degradation. Interacts with BAG6. Interacts with USP13 (via UBA 2 domain); the interaction is direct. Interacts with LMBR1L. Interacts with UBAC2 and CTNNB1. Interacts with C18orf32. In terms of assembly, (Microbial infection) Interacts with Staphylococcus aureus HIgB; this interaction regulates AMFR-mediated inflammation by promoting TAB3 ubiquitination to promote TAB3-TAK1 complex formation. Post-translationally, palmitoylation of the RING-type zing finger by ZDHHC6 promotes localization to the peripheral endoplasmic reticulum. In terms of tissue distribution, widely expressed.

The protein resides in the endoplasmic reticulum membrane. It catalyses the reaction [E2 ubiquitin-conjugating enzyme]-S-ubiquitinyl-L-cysteine + [acceptor protein]-L-cysteine = [E2 ubiquitin-conjugating enzyme]-L-cysteine + [acceptor protein]-S-ubiquitinyl-L-cysteine.. It functions in the pathway protein modification; protein ubiquitination. Its function is as follows. E3 ubiquitin-protein ligase that mediates the polyubiquitination of lysine and cysteine residues on target proteins, such as CD3D, CYP3A4, CFTR, INSIG1, SOAT2/ACAT2 and APOB for proteasomal degradation. Component of a VCP/p97-AMFR/gp78 complex that participates in the final step of endoplasmic reticulum-associated degradation (ERAD). The VCP/p97-AMFR/gp78 complex is involved in the sterol-accelerated ERAD degradation of HMGCR through binding to the HMGCR-INSIG1 complex at the ER membrane. In addition, interaction of AMFR with AUP1 facilitates interaction of AMFR with ubiquitin-conjugating enzyme UBE2G2 and ubiquitin ligase RNF139, leading to sterol-induced HMGCR ubiquitination. The ubiquitinated HMGCR is then released from the ER into the cytosol for subsequent destruction. In addition to ubiquitination on lysine residues, catalyzes ubiquitination on cysteine residues: together with INSIG1, mediates polyubiquitination of SOAT2/ACAT2 at 'Cys-277', leading to its degradation when the lipid levels are low. Catalyzes ubiquitination and subsequent degradation of INSIG1 when cells are depleted of sterols. Mediates polyubiquitination of INSIG2 at 'Cys-215' in some tissues, leading to its degradation. Also regulates ERAD through the ubiquitination of UBL4A a component of the BAG6/BAT3 complex. Also acts as a scaffold protein to assemble a complex that couples ubiquitination, retranslocation and deglycosylation. Mediates tumor invasion and metastasis as a receptor for the GPI/autocrine motility factor. In association with LMBR1L and UBAC2, negatively regulates the canonical Wnt signaling pathway in the lymphocytes by promoting the ubiquitin-mediated degradation of CTNNB1 and Wnt receptors FZD6 and LRP6. Regulates NF-kappa-B and MAPK signaling pathways by mediating 'Lys-27'-linked polyubiquitination of TAB3 and promoting subsequent TAK1/MAP3K7 activation. Required for proper lipid homeostasis. The sequence is that of E3 ubiquitin-protein ligase AMFR from Homo sapiens (Human).